Consider the following 427-residue polypeptide: 3-phosphoshikimate 1-carboxyvinyltransferase (427 aa).

Residues Lys21, Ser22, and Arg26 each contribute to the 3-phosphoshikimate site. Lys21 is a binding site for phosphoenolpyruvate. Phosphoenolpyruvate contacts are provided by Gly93 and Arg121. 4 residues coordinate 3-phosphoshikimate: Ser166, Gln168, Asp314, and Lys341. A phosphoenolpyruvate-binding site is contributed by Gln168. Asp314 serves as the catalytic Proton acceptor. Positions 345 and 387 each coordinate phosphoenolpyruvate.

It belongs to the EPSP synthase family. As to quaternary structure, monomer.

It is found in the cytoplasm. The catalysed reaction is 3-phosphoshikimate + phosphoenolpyruvate = 5-O-(1-carboxyvinyl)-3-phosphoshikimate + phosphate. Its pathway is metabolic intermediate biosynthesis; chorismate biosynthesis; chorismate from D-erythrose 4-phosphate and phosphoenolpyruvate: step 6/7. Catalyzes the transfer of the enolpyruvyl moiety of phosphoenolpyruvate (PEP) to the 5-hydroxyl of shikimate-3-phosphate (S3P) to produce enolpyruvyl shikimate-3-phosphate and inorganic phosphate. This Alkaliphilus oremlandii (strain OhILAs) (Clostridium oremlandii (strain OhILAs)) protein is 3-phosphoshikimate 1-carboxyvinyltransferase.